The following is a 1839-amino-acid chain: MAFQSALEALNSTTHRDASTNPILNSVVEPLRDSLSLYPWLLPKEAVPHLLSWGIPNSGLGVTPHPHPIHKTVETFLLFNHWHALARLPSTVMFMKPSKFQKLAALNPKFQELINFRLTAADTTRYPSTSLTFPSNSICFMHDALMYFSPAQIVDLFTQSPALETLYCSLIVPPESHFTDLSLFPEIYTYKISGQTLHYIPENHHSGSYNQPLQAPSWLKISSILSPSLALSVTKLESWGPVHSILIQRGLPPKPSLSARPPVLPNQPPRATTPNSQNQLLHQTSQLFFQLQQPQLSLVSFRIPDCVELPQATFLRQPLRHRLVPTSVYNALFTYTRAVRTLRTSDPAGFVRTQSNKPEHAWVTPNAWDNLQTLSVNAPHRPQVCYHFFSSPVARLKLHFAQHWRAYLLALTPFLTTSPLLLPLFNFNTPFPLPRLLSLFRRSVSSPRLLHSILPSQLRGAAIPNRPLPLWVTKLHHFLDSHSLLPTPPIRPRIELQRLPLMSLIPKPKIVLPLLSLLLSSPTIYIHFFQAQTPQQLHDNYHLHLHPSRFELSWTLQSYHVTQAQSFLPLLLPAPTQAQASNPAPRPPAFHAIPLPPQPSTSSSPPLQEPTLSPHLIHPPLTREPSPLNGCACDSALLPSTAAMTSAEHPTPLNPPTPSPTPDVPPPDSPGNPSLLKQVPPEANLHPIHNPDLPSSTTLPSGALTLVPAKTPSIYANPTPPSSHPFTPLADDPTAVGPCLPFHVLHPADYFPLSAEFLTRTRHVPPSSLSHPKLNCLLTCFSELSGHSESDLWLSLQSILPDSQLQNPEVSTLGLSTDILTALCFIYHSSVTLHAPSGVYHYGIASSSTVYVIHYQPGPPPHFSLSPRLAASAPRCNPTNSRLVRQALRFKLNGEFLPFTQAYAHESSITHAKNLISNMKNGFDGIMSSLTDSSKGPSPREKLTTLDSLIDVAAPREVSLIHIAGFAGCGKTHPIQKLLQTSPFHDFRISCPTNELRSEWKRDMQPTAENVWRFSTWESSLLKHSEILVIDEIYKLPRGYLDLSILADPTLSLVIILGDPLQGEYHSTSPHSSNHFLPSEVHRFKSYIDCYCFWSHRIPKQIASLFGVVCHNTNEGFVRALTSHPPNSKNLTNATNTALSLQQMGHHAITISARRVTFTEAHTILLDRHTNLLSPNNCLVALTRSRTGVYFVGNLHLASNSFGTNYMFSQALCQGTIDLNNVFPHIMPHLPKMYEPIRSRSNRFVSGSLNFRPTTNSRLLSSLTKPTHLPPHIPTNHSLDVLVSNPVLLGETLDPRLEVLHLPPTRLPLHLDLLPTVPSSSSFSSVDHLFPTPISPAICGYTFENLAAFFLPAHDPDLKEVLINDQKSNQFPYLDAPFELSCQPSSLLAPIHKPASDPTLLPGSIKKRLRFRASSSPYSITPSDQLLGQHLFSSLCLAYGRNPNSVLPFQPELFSECICINDYAQLSSKTQATIVANHQRSDPDWRLTAVRIFAKAQHKVNDASIFSGWKACQTLALMHGYIILVLGPVKKYQRIFDSKDRPPHIYYHCGKTPSQLSQWCQTHLSGSSYIANDYTAFDQSQHGEAVVLECLKMRRLSIPDSLIQLHSHLKCSVDTQFGPLTCMRLTGEPGTYDDNSDYNLAVIYSQYSLNGHPILISGDDSVLCGTPPPSPLWPTLKKMLHLRFKIERTSHPLFCGYYVSPHGAARNPYALFAKLMICVDDKSLHDKKLSYLSEFSTGHLAGDLVTSILPSHLLPYQSAVHDFFCRNCTPAEKILLSLDPIPESKILQLILKVRWASQAFFSYLPQKARELLVARSSLPSLYSNPKVSQLESELLPFSQ.

Positions 58 to 219 (SGLGVTPHPH…NQPLQAPSWL (162 aa)) constitute an Alphavirus-like MT domain. 3 disordered regions span residues 253–277 (PKPSLSARPPVLPNQPPRATTPNSQ), 578–623 (AQAS…PLTR), and 645–703 (TSAE…PSGA). The span at 584–599 (APRPPAFHAIPLPPQP) shows a compositional bias: pro residues. The span at 600-614 (STSSSPPLQEPTLSP) shows a compositional bias: low complexity. A compositionally biased stretch (pro residues) spans 652-670 (PLNPPTPSPTPDVPPPDSP). Positions 723 to 877 (SHPFTPLADD…RLAASAPRCN (155 aa)) constitute a Peptidase C21 domain. Residues Cys776 and His862 each act as for protease activity in the active site. Residues 935–1092 (KGPSPREKLT…RFKSYIDCYC (158 aa)) enclose the (+)RNA virus helicase ATP-binding domain. 965 to 972 (GFAGCGKT) contributes to the ATP binding site. Positions 1093–1224 (FWSHRIPKQI…GTIDLNNVFP (132 aa)) constitute a (+)RNA virus helicase C-terminal domain. Residues 1567–1673 (SSYIANDYTA…CGTPPPSPLW (107 aa)) form the RdRp catalytic domain.

The protein belongs to the Tymoviridae non-structural replication polyprotein family. Post-translationally, specific enzymatic cleavages by the host yield mature proteins.

The catalysed reaction is RNA(n) + a ribonucleoside 5'-triphosphate = RNA(n+1) + diphosphate. Functionally, acts as a cysteine protease, methyltransferase and deubiquitinase. The cysteine protease activity cleaves the polyprotein giving rise to mature proteins. The methyltransferase domain is probably involved in viral RNA capping. Its function is as follows. RNA-directed RNA polymerase is responsible for the replication and transcription of the genome. The polypeptide is Non-structural replication polyprotein (Solanum lycopersicum (Tomato)).